The primary structure comprises 515 residues: Cytochrome P450 76C3 (515 aa).

Residues L5–A25 traverse the membrane as a helical segment. Residue C451 coordinates heme.

It belongs to the cytochrome P450 family. Requires heme as cofactor.

Its subcellular location is the membrane. In Arabidopsis thaliana (Mouse-ear cress), this protein is Cytochrome P450 76C3 (CYP76C3).